The sequence spans 374 residues: tRNA-specific 2-thiouridylase MnmA (374 aa).

ATP contacts are provided by residues 17 to 24 (GMSGGVDS) and methionine 43. An interaction with target base in tRNA region spans residues 103 to 105 (NPD). Cysteine 108 (nucleophile) is an active-site residue. A disulfide bridge links cysteine 108 with cysteine 204. Glycine 132 is a binding site for ATP. The tract at residues 154-156 (KDQ) is interaction with tRNA. Cysteine 204 acts as the Cysteine persulfide intermediate in catalysis. Residues 316-317 (RY) are interaction with tRNA.

It belongs to the MnmA/TRMU family.

Its subcellular location is the cytoplasm. The enzyme catalyses S-sulfanyl-L-cysteinyl-[protein] + uridine(34) in tRNA + AH2 + ATP = 2-thiouridine(34) in tRNA + L-cysteinyl-[protein] + A + AMP + diphosphate + H(+). Its function is as follows. Catalyzes the 2-thiolation of uridine at the wobble position (U34) of tRNA, leading to the formation of s(2)U34. The sequence is that of tRNA-specific 2-thiouridylase MnmA from Pseudomonas putida (strain W619).